A 253-amino-acid chain; its full sequence is Imidazole glycerol phosphate synthase subunit HisF (253 aa).

Residues aspartate 11 and aspartate 130 contribute to the active site.

Belongs to the HisA/HisF family. In terms of assembly, heterodimer of HisH and HisF.

Its subcellular location is the cytoplasm. It carries out the reaction 5-[(5-phospho-1-deoxy-D-ribulos-1-ylimino)methylamino]-1-(5-phospho-beta-D-ribosyl)imidazole-4-carboxamide + L-glutamine = D-erythro-1-(imidazol-4-yl)glycerol 3-phosphate + 5-amino-1-(5-phospho-beta-D-ribosyl)imidazole-4-carboxamide + L-glutamate + H(+). The protein operates within amino-acid biosynthesis; L-histidine biosynthesis; L-histidine from 5-phospho-alpha-D-ribose 1-diphosphate: step 5/9. In terms of biological role, IGPS catalyzes the conversion of PRFAR and glutamine to IGP, AICAR and glutamate. The HisF subunit catalyzes the cyclization activity that produces IGP and AICAR from PRFAR using the ammonia provided by the HisH subunit. This chain is Imidazole glycerol phosphate synthase subunit HisF, found in Geotalea uraniireducens (strain Rf4) (Geobacter uraniireducens).